Here is a 149-residue protein sequence, read N- to C-terminus: Large ribosomal subunit protein bL9 (149 aa).

The protein belongs to the bacterial ribosomal protein bL9 family.

Its function is as follows. Binds to the 23S rRNA. The sequence is that of Large ribosomal subunit protein bL9 from Thiobacillus denitrificans (strain ATCC 25259 / T1).